We begin with the raw amino-acid sequence, 212 residues long: MKLHNDYRLLTPRINRDKQSFLARVIITLKTSFSLDLFSGLKTALGAFFSPKVTIHYPLESAPLSPRYRAIHKLQRLLESENERCIGCGLCEKICTSNCIRIITDKGEDGRKKILNYSINFGRCIYCGLCAEVCPELAIVHGDLVENASTQRAFFGFKPQLLEHKSSLLEFGGFGSISVNADERVKTTPLSYCTQDSQNMLSESAPQENTNV.

4Fe-4S ferredoxin-type domains lie at 76 to 105 (RLLESENERCIGCGLCEKICTSNCIRIITD) and 115 to 144 (LNYSINFGRCIYCGLCAEVCPELAIVHGDL). [4Fe-4S] cluster-binding residues include Cys85, Cys88, Cys91, Cys95, Cys124, Cys127, Cys130, and Cys134.

It belongs to the complex I 23 kDa subunit family. As to quaternary structure, NDH-1 is composed of 14 different subunits. Subunits NuoA, H, J, K, L, M, N constitute the membrane sector of the complex. It depends on [4Fe-4S] cluster as a cofactor.

It localises to the cell inner membrane. It catalyses the reaction a quinone + NADH + 5 H(+)(in) = a quinol + NAD(+) + 4 H(+)(out). In terms of biological role, NDH-1 shuttles electrons from NADH, via FMN and iron-sulfur (Fe-S) centers, to quinones in the respiratory chain. The immediate electron acceptor for the enzyme in this species is believed to be ubiquinone. Couples the redox reaction to proton translocation (for every two electrons transferred, four hydrogen ions are translocated across the cytoplasmic membrane), and thus conserves the redox energy in a proton gradient. The protein is NADH-quinone oxidoreductase subunit I of Helicobacter hepaticus (strain ATCC 51449 / 3B1).